We begin with the raw amino-acid sequence, 477 residues long: Glutamate--tRNA ligase (477 aa).

The 'HIGH' region signature appears at 8 to 18; sequence PSPTGTLHIGT. A 'KMSKS' region motif is present at residues 247-251; the sequence is KLSKR. ATP is bound at residue Lys250.

This sequence belongs to the class-I aminoacyl-tRNA synthetase family. Glutamate--tRNA ligase type 1 subfamily. As to quaternary structure, monomer.

It localises to the cytoplasm. It catalyses the reaction tRNA(Glu) + L-glutamate + ATP = L-glutamyl-tRNA(Glu) + AMP + diphosphate. Functionally, catalyzes the attachment of glutamate to tRNA(Glu) in a two-step reaction: glutamate is first activated by ATP to form Glu-AMP and then transferred to the acceptor end of tRNA(Glu). The polypeptide is Glutamate--tRNA ligase (Parasynechococcus marenigrum (strain WH8102)).